Here is an 865-residue protein sequence, read N- to C-terminus: Fatty acyl-CoA synthetase and RNA processing-associated kinase 1 (865 aa).

A Protein kinase domain is found at 41-313 (YILGSTLGEG…LKQIKKHEWL (273 aa)). ATP is bound by residues 47-55 (LGEGEFGKV) and lysine 80. Residue aspartate 175 is the Proton acceptor of the active site. The disordered stretch occupies residues 341–398 (KPRRRYGSRPQSSCSTSSLGSRSDKRDSLVIDSTLITFPAPPQESQNHIITRPASIAS). Residues 352-361 (SSCSTSSLGS) are compositionally biased toward low complexity. Serine 441 bears the Phosphoserine mark. 3 disordered regions span residues 480–554 (ISGS…YTTP), 673–733 (TEES…LNEA), and 754–782 (SLYS…YQTN). Positions 494 to 538 (STTMQTSKIQPNNMASSQNHQYNKNKTQNSLQSAKNFYRTSSSSH) are enriched in polar residues. Basic and acidic residues-rich tracts occupy residues 690–708 (EGQE…EKGS) and 724–733 (NHLERSLNEA).

The protein belongs to the protein kinase superfamily. Ser/Thr protein kinase family. Interacts with FAA3, POL5 and TPA1.

The protein resides in the cytoplasm. The enzyme catalyses L-seryl-[protein] + ATP = O-phospho-L-seryl-[protein] + ADP + H(+). The catalysed reaction is L-threonyl-[protein] + ATP = O-phospho-L-threonyl-[protein] + ADP + H(+). Putative serine/threonine-protein kinase that may be involved in rRNA transcription and ribosome biogenesis. The sequence is that of Fatty acyl-CoA synthetase and RNA processing-associated kinase 1 (FRK1) from Saccharomyces cerevisiae (strain ATCC 204508 / S288c) (Baker's yeast).